Here is a 954-residue protein sequence, read N- to C-terminus: Alpha-xylosidase BoGH31A (954 aa).

A signal peptide spans 1 to 20 (MIMNMKNIFYCLLPGLLLGA). Cysteine 21 carries N-palmitoyl cysteine lipidation. Residue cysteine 21 is the site of S-diacylglycerol cysteine attachment. In terms of domain architecture, PA14 spans 227–366 (TGQEGALTGT…NPEEQGKQSW (140 aa)). Residues aspartate 553 and glutamate 556 contribute to the active site. Catalysis depends on aspartate 630, which acts as the Proton donor.

This sequence belongs to the glycosyl hydrolase 31 family.

The protein resides in the cell inner membrane. The enzyme catalyses Hydrolysis of terminal, non-reducing alpha-D-xylose residues with release of alpha-D-xylose.. The protein operates within glucan metabolism; xyloglucan degradation. Its function is as follows. Catalyzes the liberation of alpha-xylose from the non-reducing terminal glucose of xyloglucan oligosaccharides in xyloglucan degradation, converting the 'X' to 'G' units. This chain is Alpha-xylosidase BoGH31A, found in Bacteroides ovatus (strain ATCC 8483 / DSM 1896 / JCM 5824 / BCRC 10623 / CCUG 4943 / NCTC 11153).